A 354-amino-acid polypeptide reads, in one-letter code: Guanine nucleotide-binding protein G(o) subunit alpha (354 aa).

A lipid anchor (N-myristoyl glycine) is attached at Gly2. The S-palmitoyl cysteine moiety is linked to residue Cys3. A G-alpha domain is found at Lys32–Tyr354. Residues Lys35–Thr48 are G1 motif. Residues Glu43, Lys46, Ser47, Thr48, Ser152, Leu176, Arg177, Thr178, and Arg179 each contribute to the GTP site. A Mg(2+)-binding site is contributed by Ser47. The tract at residues Asp174–Thr182 is G2 motif. Thr182 serves as a coordination point for Mg(2+). Residues Phe197–Arg206 are G3 motif. Gln205 is subject to 5-glutamyl histamine. The interval Ile266–Asp273 is G4 motif. 3 residues coordinate GTP: Asn270, Asp273, and Cys325. A G5 motif region spans residues Thr324–Thr329. Residue Cys351 is the site of S-palmitoyl cysteine attachment.

The protein belongs to the G-alpha family. G(i/o/t/z) subfamily. G proteins are composed of 3 units; alpha, beta and gamma. The alpha chain contains the guanine nucleotide binding site. Forms a complex with GNB1 and GNG3. Interacts with RGS14. Interacts with RGS16. Interacts with RGS19. Interacts (when palmitoylated) with ADGRG3. Histaminylated at Gln-205 residues by TGM2.

Its subcellular location is the cell membrane. The protein resides in the membrane. The catalysed reaction is GTP + H2O = GDP + phosphate + H(+). Its activity is regulated as follows. The GTPase activity is promoted by GTPAse activators, such as RGS14, RGS16 and RGS19. In terms of biological role, guanine nucleotide-binding proteins (G proteins) function as transducers downstream of G protein-coupled receptors (GPCRs) in numerous signaling cascades. The alpha chain contains the guanine nucleotide binding site and alternates between an active, GTP-bound state and an inactive, GDP-bound state. Signaling by an activated GPCR promotes GDP release and GTP binding. The alpha subunit has a low GTPase activity that converts bound GTP to GDP, thereby terminating the signal. Both GDP release and GTP hydrolysis are modulated by numerous regulatory proteins. Signaling is mediated via effector proteins, such as adenylate cyclase. Inhibits adenylate cyclase activity, leading to decreased intracellular cAMP levels. The protein is Guanine nucleotide-binding protein G(o) subunit alpha (GNAO1) of Bos taurus (Bovine).